Here is a 92-residue protein sequence, read N- to C-terminus: MTRSLKKNPFVANHLLGKIEKLNMRAEKEIIVTWSRASTIIPIMIGHTIAIHNGKEHLPIYITESMVGHKLGEFAPTLTFRGHARNDKKSRR.

Belongs to the universal ribosomal protein uS19 family.

The protein resides in the plastid. Its subcellular location is the chloroplast. Functionally, protein S19 forms a complex with S13 that binds strongly to the 16S ribosomal RNA. This Nandina domestica (Heavenly bamboo) protein is Small ribosomal subunit protein uS19c.